The chain runs to 78 residues: Large ribosomal subunit protein bL28 (78 aa).

Belongs to the bacterial ribosomal protein bL28 family.

This is Large ribosomal subunit protein bL28 from Alcanivorax borkumensis (strain ATCC 700651 / DSM 11573 / NCIMB 13689 / SK2).